A 254-amino-acid chain; its full sequence is Putative biopolymer transport protein ExbB-like 1 (254 aa).

3 consecutive transmembrane segments (helical) span residues 39-59, 141-161, and 185-205; these read GGVVMFPLLLLSILALTTAFE, LETIIALAPLLGLLGTVTGLI, and IGEALITTAAGMMVAIFALLV.

Belongs to the ExbB/TolQ family.

It is found in the cell inner membrane. In terms of biological role, involved in the TonB-dependent energy-dependent transport of various receptor-bound substrates. Protects ExbD from proteolytic degradation and functionally stabilizes TonB. The polypeptide is Putative biopolymer transport protein ExbB-like 1 (Synechocystis sp. (strain ATCC 27184 / PCC 6803 / Kazusa)).